The following is a 255-amino-acid chain: Thiazole synthase (255 aa).

The Schiff-base intermediate with DXP role is filled by Lys-95. 1-deoxy-D-xylulose 5-phosphate contacts are provided by residues Gly-156, Ala-182–Gly-183, and Asn-204–Thr-205.

The protein belongs to the ThiG family. In terms of assembly, homotetramer. Forms heterodimers with either ThiH or ThiS.

Its subcellular location is the cytoplasm. It carries out the reaction [ThiS sulfur-carrier protein]-C-terminal-Gly-aminoethanethioate + 2-iminoacetate + 1-deoxy-D-xylulose 5-phosphate = [ThiS sulfur-carrier protein]-C-terminal Gly-Gly + 2-[(2R,5Z)-2-carboxy-4-methylthiazol-5(2H)-ylidene]ethyl phosphate + 2 H2O + H(+). It functions in the pathway cofactor biosynthesis; thiamine diphosphate biosynthesis. Functionally, catalyzes the rearrangement of 1-deoxy-D-xylulose 5-phosphate (DXP) to produce the thiazole phosphate moiety of thiamine. Sulfur is provided by the thiocarboxylate moiety of the carrier protein ThiS. In vitro, sulfur can be provided by H(2)S. In Vibrio campbellii (strain ATCC BAA-1116), this protein is Thiazole synthase.